The chain runs to 469 residues: MTAVTRFAPSPTGFLHVGGARTALYSWLYAKSQGGKFVLRIEDTDIERSTQEAIDAILEGMEWLGLTWDDGPYYQTKRFDRYKALINEMLEEGKAYKCFMSSAELDEIREKQKANGEKPRYPGTWRDRTDHPEGEPFVIRFKNPLEGKVLVKDHIRGNIEIANSELDDLIILRSDGTPTYNFCVVVDDWDMGITHVVRGEDHINNTPRQINILQALGAPVPEYAHVSMILGDDGKKLSKRHGAVSVMQYRDDGFLPQALLNYLVRLGWSYGDQEIFSKEEMIELFSLDAIGQSASAFNTDKLIWLNQHYIKELPVSEVLPYAKWHFEQQGIDVSNGPALEEVIKVQADRVKTLKELAEISGYFYQEYEDFDEKAAKKHLRPVAQEPLEAVKAALMALSTWNAETIHEAINKTAETLGVGMGKVGMPLRVAATGSGNSPSLDVTLNLLKPEQIAQRIDKALIYIANRQQS.

The 'HIGH' region motif lies at 9 to 19 (PSPTGFLHVGG). The 'KMSKS' region motif lies at 236–240 (KLSKR). ATP is bound at residue Lys239.

This sequence belongs to the class-I aminoacyl-tRNA synthetase family. Glutamate--tRNA ligase type 1 subfamily. Monomer.

It localises to the cytoplasm. The catalysed reaction is tRNA(Glu) + L-glutamate + ATP = L-glutamyl-tRNA(Glu) + AMP + diphosphate. Catalyzes the attachment of glutamate to tRNA(Glu) in a two-step reaction: glutamate is first activated by ATP to form Glu-AMP and then transferred to the acceptor end of tRNA(Glu). This is Glutamate--tRNA ligase from Pseudoalteromonas atlantica (strain T6c / ATCC BAA-1087).